Reading from the N-terminus, the 85-residue chain is Small ribosomal subunit protein uS17 (85 aa).

It belongs to the universal ribosomal protein uS17 family. Part of the 30S ribosomal subunit.

Functionally, one of the primary rRNA binding proteins, it binds specifically to the 5'-end of 16S ribosomal RNA. The chain is Small ribosomal subunit protein uS17 from Actinobacillus succinogenes (strain ATCC 55618 / DSM 22257 / CCUG 43843 / 130Z).